Reading from the N-terminus, the 201-residue chain is Ribosomal RNA large subunit methyltransferase E (201 aa).

Glycine 40, tryptophan 42, aspartate 62, aspartate 78, and aspartate 101 together coordinate S-adenosyl-L-methionine. Residue lysine 141 is the Proton acceptor of the active site.

Belongs to the class I-like SAM-binding methyltransferase superfamily. RNA methyltransferase RlmE family.

The protein localises to the cytoplasm. The enzyme catalyses uridine(2552) in 23S rRNA + S-adenosyl-L-methionine = 2'-O-methyluridine(2552) in 23S rRNA + S-adenosyl-L-homocysteine + H(+). In terms of biological role, specifically methylates the uridine in position 2552 of 23S rRNA at the 2'-O position of the ribose in the fully assembled 50S ribosomal subunit. The polypeptide is Ribosomal RNA large subunit methyltransferase E (Anaplasma marginale (strain Florida)).